The primary structure comprises 283 residues: Elongation factor Ts (283 aa).

An involved in Mg(2+) ion dislocation from EF-Tu region spans residues 80–83 (TDFV).

The protein belongs to the EF-Ts family.

Its subcellular location is the cytoplasm. In terms of biological role, associates with the EF-Tu.GDP complex and induces the exchange of GDP to GTP. It remains bound to the aminoacyl-tRNA.EF-Tu.GTP complex up to the GTP hydrolysis stage on the ribosome. In Cronobacter sakazakii (strain ATCC BAA-894) (Enterobacter sakazakii), this protein is Elongation factor Ts.